We begin with the raw amino-acid sequence, 155 residues long: Ribosome maturation factor RimP (155 aa).

The protein belongs to the RimP family.

Its subcellular location is the cytoplasm. Its function is as follows. Required for maturation of 30S ribosomal subunits. This is Ribosome maturation factor RimP from Staphylococcus aureus (strain bovine RF122 / ET3-1).